The sequence spans 1175 residues: uncharacterized protein (1175 aa).

Residue 586–593 (GPAGTGKT) participates in ATP binding.

This is an uncharacterized protein from Methanocaldococcus jannaschii (strain ATCC 43067 / DSM 2661 / JAL-1 / JCM 10045 / NBRC 100440) (Methanococcus jannaschii).